The following is a 64-amino-acid chain: Conotoxin Am1.1 (64 aa).

The N-terminal stretch at 1–22 (MSCLPVFVILLLLTASGPSVDA) is a signal peptide. A propeptide spanning residues 23–49 (RLKTKDDVPLSSFRDNAKSTLRRLQDK) is cleaved from the precursor. Residue P60 is modified to 4-hydroxyproline; partial; in major form.

Belongs to the conotoxin T superfamily. In terms of processing, contains 2 disulfide bonds. As to expression, expressed by the venom duct.

The protein resides in the secreted. Its function is as follows. Probable toxin that inhibits ion channels. The protein is Conotoxin Am1.1 of Conus amadis (Amadis cone).